Consider the following 590-residue polypeptide: Multidrug resistance ABC transporter ATP-binding and permease protein (590 aa).

Transmembrane regions (helical) follow at residues 35–55 (YLFF…QLQV), 79–99 (IALY…LGIF), 150–170 (IPQA…MLQM), 176–196 (LAMI…MTFG), 261–281 (VMML…IYLI), and 292–312 (LGMM…ATFF). The ABC transmembrane type-1 domain occupies 38–317 (FVIGIVAGII…VATFFTELAK (280 aa)). One can recognise an ABC transporter domain in the interval 349-584 (LSAHHVDFAY…HPLYAKYVSE (236 aa)). 382–389 (GPSGGGKS) provides a ligand contact to ATP.

This sequence belongs to the ABC transporter superfamily. Multidrug exporter LmrA (TC 3.A.1.117.1) family. As to quaternary structure, homodimer.

The protein resides in the cell membrane. It carries out the reaction ATP + H2O + xenobioticSide 1 = ADP + phosphate + xenobioticSide 2.. Functionally, efflux transporter for a variety of amphiphilic cationic compounds, including antibiotics. The protein is Multidrug resistance ABC transporter ATP-binding and permease protein (lmrA) of Lactococcus lactis subsp. cremoris (strain MG1363).